The following is a 414-amino-acid chain: 2,3-diketo-5-methylthiopentyl-1-phosphate enolase (414 aa).

K99 acts as the Proton acceptor in catalysis. Residues K148, K174–E177, H265, G338, and G360–G361 contribute to the substrate site. Residues K174, D176, and E177 each coordinate Mg(2+). At K174 the chain carries N6-carboxylysine.

Belongs to the RuBisCO large chain family. Type IV subfamily. As to quaternary structure, homodimer. The cofactor is Mg(2+).

The enzyme catalyses 5-methylsulfanyl-2,3-dioxopentyl phosphate = 2-hydroxy-5-methylsulfanyl-3-oxopent-1-enyl phosphate. It functions in the pathway amino-acid biosynthesis; L-methionine biosynthesis via salvage pathway; L-methionine from S-methyl-5-thio-alpha-D-ribose 1-phosphate: step 3/6. Its function is as follows. Catalyzes the enolization of 2,3-diketo-5-methylthiopentyl-1-phosphate (DK-MTP-1-P) into 2-hydroxy-3-keto-5-methylthiopentenyl-1-phosphate (HK-MTPenyl-1-P). In Bacillus cereus (strain B4264), this protein is 2,3-diketo-5-methylthiopentyl-1-phosphate enolase.